A 336-amino-acid chain; its full sequence is Alcohol dehydrogenase, propanol-preferring (336 aa).

Cys-37, His-58, Cys-89, Cys-92, Cys-95, Cys-103, and Cys-145 together coordinate Zn(2+).

The protein belongs to the zinc-containing alcohol dehydrogenase family. Zn(2+) serves as cofactor.

It catalyses the reaction a primary alcohol + NAD(+) = an aldehyde + NADH + H(+). The enzyme catalyses a secondary alcohol + NAD(+) = a ketone + NADH + H(+). Functionally, preferred specificity is towards 1-propanol. The chain is Alcohol dehydrogenase, propanol-preferring (adhP) from Escherichia coli (strain K12).